We begin with the raw amino-acid sequence, 542 residues long: GMP synthase [glutamine-hydrolyzing] (542 aa).

Residues 28-218 (MLVILDFGSQ…VYHICQCEPT (191 aa)) form the Glutamine amidotransferase type-1 domain. The Nucleophile role is filled by Cys105. Residues His192 and Glu194 contribute to the active site. The 199-residue stretch at 219–417 (WTTEAFVEES…IGLPEEIVRR (199 aa)) folds into the GMPS ATP-PPase domain. Position 246–252 (246–252 (SGGVDSS)) interacts with ATP.

Homodimer.

The catalysed reaction is XMP + L-glutamine + ATP + H2O = GMP + L-glutamate + AMP + diphosphate + 2 H(+). It participates in purine metabolism; GMP biosynthesis; GMP from XMP (L-Gln route): step 1/1. Functionally, catalyzes the synthesis of GMP from XMP. This chain is GMP synthase [glutamine-hydrolyzing], found in Rippkaea orientalis (strain PCC 8801 / RF-1) (Cyanothece sp. (strain PCC 8801)).